The sequence spans 720 residues: Ciliated left-right organizer metallopeptidase (720 aa).

An N-terminal signal peptide occupies residues 1 to 25 (MTVSFSMFQIYRLVWLSFMTSMCLS). Topologically, residues 26–668 (ACIHDSVLQE…ALYVSHMLYS (643 aa)) are extracellular. Histidine 243 provides a ligand contact to Zn(2+). Residue glutamate 244 is part of the active site. Zn(2+) is bound by residues histidine 247 and histidine 322. The chain crosses the membrane as a helical span at residues 669-689 (YVIGGGCCAVCGAAIIFALFW). The Cytoplasmic segment spans residues 690 to 720 (YKLRRQFLRVGSSYPPETSNHERPQIPADLV).

The protein belongs to the peptidase M8 family. Zn(2+) is required as a cofactor.

The protein resides in the membrane. Its function is as follows. Putative metalloprotease playing a role in the process of LR patterning. The sequence is that of Ciliated left-right organizer metallopeptidase (cirop) from Xenopus laevis (African clawed frog).